We begin with the raw amino-acid sequence, 495 residues long: Probable cytochrome P450 513C1 (495 aa).

A helical transmembrane segment spans residues 1–21; that stretch reads MNYLVLILVSLVSIYFLFIKN. Cysteine 441 provides a ligand contact to heme.

Belongs to the cytochrome P450 family. Requires heme as cofactor.

It localises to the membrane. This is Probable cytochrome P450 513C1 (cyp513C1) from Dictyostelium discoideum (Social amoeba).